The sequence spans 213 residues: Ribosomal RNA small subunit methyltransferase G (213 aa).

S-adenosyl-L-methionine contacts are provided by residues Gly-75, Phe-80, 128 to 129, and Arg-144; that span reads IE.

Belongs to the methyltransferase superfamily. RNA methyltransferase RsmG family.

The protein resides in the cytoplasm. It carries out the reaction guanosine(527) in 16S rRNA + S-adenosyl-L-methionine = N(7)-methylguanosine(527) in 16S rRNA + S-adenosyl-L-homocysteine. In terms of biological role, specifically methylates the N7 position of guanine in position 527 of 16S rRNA. This is Ribosomal RNA small subunit methyltransferase G from Brucella ovis (strain ATCC 25840 / 63/290 / NCTC 10512).